The primary structure comprises 373 residues: Queuine tRNA-ribosyltransferase (373 aa).

Asp89 acts as the Proton acceptor in catalysis. Residues 89–93 (DSGGF), Asp143, Gln192, and Gly220 each bind substrate. The segment at 251 to 257 (GVGTPED) is RNA binding. The Nucleophile role is filled by Asp270. An RNA binding; important for wobble base 34 recognition region spans residues 275 to 279 (TRNAR). Positions 308, 310, 313, and 339 each coordinate Zn(2+).

It belongs to the queuine tRNA-ribosyltransferase family. As to quaternary structure, homodimer. Within each dimer, one monomer is responsible for RNA recognition and catalysis, while the other monomer binds to the replacement base PreQ1. The cofactor is Zn(2+).

It carries out the reaction 7-aminomethyl-7-carbaguanine + guanosine(34) in tRNA = 7-aminomethyl-7-carbaguanosine(34) in tRNA + guanine. The protein operates within tRNA modification; tRNA-queuosine biosynthesis. Its function is as follows. Catalyzes the base-exchange of a guanine (G) residue with the queuine precursor 7-aminomethyl-7-deazaguanine (PreQ1) at position 34 (anticodon wobble position) in tRNAs with GU(N) anticodons (tRNA-Asp, -Asn, -His and -Tyr). Catalysis occurs through a double-displacement mechanism. The nucleophile active site attacks the C1' of nucleotide 34 to detach the guanine base from the RNA, forming a covalent enzyme-RNA intermediate. The proton acceptor active site deprotonates the incoming PreQ1, allowing a nucleophilic attack on the C1' of the ribose to form the product. After dissociation, two additional enzymatic reactions on the tRNA convert PreQ1 to queuine (Q), resulting in the hypermodified nucleoside queuosine (7-(((4,5-cis-dihydroxy-2-cyclopenten-1-yl)amino)methyl)-7-deazaguanosine). The sequence is that of Queuine tRNA-ribosyltransferase from Aliarcobacter butzleri (strain RM4018) (Arcobacter butzleri).